We begin with the raw amino-acid sequence, 89 residues long: Small ribosomal subunit protein uS15 (89 aa).

Belongs to the universal ribosomal protein uS15 family. In terms of assembly, part of the 30S ribosomal subunit. Forms a bridge to the 50S subunit in the 70S ribosome, contacting the 23S rRNA.

Its function is as follows. One of the primary rRNA binding proteins, it binds directly to 16S rRNA where it helps nucleate assembly of the platform of the 30S subunit by binding and bridging several RNA helices of the 16S rRNA. Functionally, forms an intersubunit bridge (bridge B4) with the 23S rRNA of the 50S subunit in the ribosome. The protein is Small ribosomal subunit protein uS15 of Mesorhizobium japonicum (strain LMG 29417 / CECT 9101 / MAFF 303099) (Mesorhizobium loti (strain MAFF 303099)).